Here is a 302-residue protein sequence, read N- to C-terminus: Phospho-N-acetylmuramoyl-pentapeptide-transferase (302 aa).

Transmembrane regions (helical) follow at residues 1-21 (MIAA…KLFR), 42-62 (GTPT…GMIS), 67-87 (MVLL…FLSV), 95-115 (LKTY…LLLI), 123-143 (FFGS…LVIV), 154-174 (GLDG…WFFL), 178-198 (GVSE…LVFN), 204-224 (IFMG…VSVL), 229-249 (FYLV…ILQV), and 279-299 (IVAV…EIFG).

The protein belongs to the glycosyltransferase 4 family. MraY subfamily. Requires Mg(2+) as cofactor.

It localises to the cell inner membrane. The enzyme catalyses UDP-N-acetyl-alpha-D-muramoyl-L-alanyl-gamma-D-glutamyl-meso-2,6-diaminopimeloyl-D-alanyl-D-alanine + di-trans,octa-cis-undecaprenyl phosphate = di-trans,octa-cis-undecaprenyl diphospho-N-acetyl-alpha-D-muramoyl-L-alanyl-D-glutamyl-meso-2,6-diaminopimeloyl-D-alanyl-D-alanine + UMP. It participates in cell wall biogenesis; peptidoglycan biosynthesis. Functionally, catalyzes the initial step of the lipid cycle reactions in the biosynthesis of the cell wall peptidoglycan: transfers peptidoglycan precursor phospho-MurNAc-pentapeptide from UDP-MurNAc-pentapeptide onto the lipid carrier undecaprenyl phosphate, yielding undecaprenyl-pyrophosphoryl-MurNAc-pentapeptide, known as lipid I. This Thermotoga maritima (strain ATCC 43589 / DSM 3109 / JCM 10099 / NBRC 100826 / MSB8) protein is Phospho-N-acetylmuramoyl-pentapeptide-transferase.